Reading from the N-terminus, the 267-residue chain is L-aspartate dehydrogenase (267 aa).

NAD(+)-binding residues include alanine 124 and asparagine 190. Residue histidine 218 is part of the active site.

This sequence belongs to the L-aspartate dehydrogenase family.

The catalysed reaction is L-aspartate + NADP(+) + H2O = oxaloacetate + NH4(+) + NADPH + H(+). The enzyme catalyses L-aspartate + NAD(+) + H2O = oxaloacetate + NH4(+) + NADH + H(+). It participates in cofactor biosynthesis; NAD(+) biosynthesis; iminoaspartate from L-aspartate (dehydrogenase route): step 1/1. Its function is as follows. Specifically catalyzes the NAD or NADP-dependent dehydrogenation of L-aspartate to iminoaspartate. In Methanococcus maripaludis (strain C7 / ATCC BAA-1331), this protein is L-aspartate dehydrogenase.